The chain runs to 2710 residues: Serine/threonine-protein kinase ATR (2710 aa).

In terms of domain architecture, FAT spans 1647 to 2257 (TLAKASFRCQ…LWMMAAVSKS (611 aa)). Positions 2368-2680 (IADDAEILNS…GVNAAPSLPL (313 aa)) constitute a PI3K/PI4K catalytic domain. The interval 2374 to 2380 (ILNSLQK) is G-loop. Residues 2545–2553 (GLGDRHGEN) form a catalytic loop region. Residues 2565–2589 (HVDFSCLFDKGLLLEKPEVVPFRFT) are activation loop. One can recognise an FATC domain in the interval 2678-2710 (LPLSVEGQARRLIAEAVSHSNLGKMYVWWMAWF).

It belongs to the PI3/PI4-kinase family. ATM subfamily.

The protein localises to the nucleus. It catalyses the reaction L-seryl-[protein] + ATP = O-phospho-L-seryl-[protein] + ADP + H(+). The catalysed reaction is L-threonyl-[protein] + ATP = O-phospho-L-threonyl-[protein] + ADP + H(+). Functionally, probable serine/threonine kinase. Seems to play a central role in cell-cycle regulation by transmitting DNA damage signals to downstream effectors of cell-cycle progression. May recognize the substrate consensus sequence [ST]-Q and phosphorylate histone variant H2AX to form H2AXS139ph at sites of DNA damage, thereby regulating DNA damage response mechanism. The polypeptide is Serine/threonine-protein kinase ATR (Oryza sativa subsp. indica (Rice)).